The following is an 89-amino-acid chain: Small ribosomal subunit protein bS20 (89 aa).

Disordered regions lie at residues 1–25 and 69–89; these read MANIKSAIKRAKTSEKRRAHNASMK and KNAASRQKSRLAKKLNSIQAS. Basic residues predominate over residues 7–20; sequence AIKRAKTSEKRRAH.

It belongs to the bacterial ribosomal protein bS20 family.

Its function is as follows. Binds directly to 16S ribosomal RNA. In Geobacillus kaustophilus (strain HTA426), this protein is Small ribosomal subunit protein bS20.